The following is a 141-amino-acid chain: Mitochondrial import inner membrane translocase subunit Tim16 (141 aa).

Disordered regions lie at residues 34-53 and 108-141; these read AARRAGGGKQGDKSAESNLR and LDHEIKAHEQPRSSNTEAAQDTAEESQSRSRQRR. Positions 60-113 are J-like; sequence EAKQILNIDDPKNVDAITKNYEHLFQVNERSKGGSFYIQSKVFRAKERLDHEIK. The segment covering 108 to 118 has biased composition (basic and acidic residues); the sequence is LDHEIKAHEQP.

It belongs to the TIM16/PAM16 family. In terms of assembly, probable component of the PAM complex at least composed of a mitochondrial HSP70 protein, Roe1, TIM44, blp/TIM16 and TIM14. Associates with the TIM23 complex. In terms of tissue distribution, expressed in distinct cells in the embryonic and larval nervous system.

It localises to the mitochondrion inner membrane. Its function is as follows. Regulates ATP-dependent protein translocation into the mitochondrial matrix. Essential for larval development. This is Mitochondrial import inner membrane translocase subunit Tim16 (blp) from Drosophila melanogaster (Fruit fly).